Reading from the N-terminus, the 248-residue chain is Pyridoxine 5'-phosphate synthase (248 aa).

Residue Asn12 coordinates 3-amino-2-oxopropyl phosphate. 14–15 (DH) lines the 1-deoxy-D-xylulose 5-phosphate pocket. Residue Arg23 participates in 3-amino-2-oxopropyl phosphate binding. The Proton acceptor role is filled by His48. The 1-deoxy-D-xylulose 5-phosphate site is built by Arg50 and His55. Glu75 acts as the Proton acceptor in catalysis. Thr105 provides a ligand contact to 1-deoxy-D-xylulose 5-phosphate. The active-site Proton donor is the His196. Residues Gly197 and 218–219 (GH) contribute to the 3-amino-2-oxopropyl phosphate site.

Belongs to the PNP synthase family. As to quaternary structure, homooctamer; tetramer of dimers.

Its subcellular location is the cytoplasm. It carries out the reaction 3-amino-2-oxopropyl phosphate + 1-deoxy-D-xylulose 5-phosphate = pyridoxine 5'-phosphate + phosphate + 2 H2O + H(+). The protein operates within cofactor biosynthesis; pyridoxine 5'-phosphate biosynthesis; pyridoxine 5'-phosphate from D-erythrose 4-phosphate: step 5/5. Its function is as follows. Catalyzes the complicated ring closure reaction between the two acyclic compounds 1-deoxy-D-xylulose-5-phosphate (DXP) and 3-amino-2-oxopropyl phosphate (1-amino-acetone-3-phosphate or AAP) to form pyridoxine 5'-phosphate (PNP) and inorganic phosphate. This Pseudomonas aeruginosa (strain UCBPP-PA14) protein is Pyridoxine 5'-phosphate synthase.